Here is a 280-residue protein sequence, read N- to C-terminus: Four and a half LIM domains protein 3 (280 aa).

Ser2 carries the N-acetylserine modification. A C4-type zinc finger spans residues 7–31; that stretch reads CAKCSESLYGRKYIQTDDGPYCVPC. 2 LIM zinc-binding domains span residues 40–92 and 101–153; these read CAEC…CNDC and CSAC…CVPC. Lys157 is modified (N6-acetyllysine). LIM zinc-binding domains follow at residues 162 to 212 and 221 to 275; these read CARC…CVTC and CSSC…CQGC. Lys235 carries the N6-acetyllysine modification.

As to quaternary structure, interacts with SOX15; the interaction recruits FHL3 to FOXK1 promoters where it acts as a transcriptional coactivator of FOXK1.

It localises to the nucleus. Its subcellular location is the cytoplasm. Its function is as follows. Recruited by SOX15 to FOXK1 promoters where it acts as a transcriptional coactivator of FOXK1. This chain is Four and a half LIM domains protein 3 (FHL3), found in Bos taurus (Bovine).